The sequence spans 353 residues: Basic membrane protein C (353 aa).

Positions 1–16 (MFKRFIFITLSLLVFA) are cleaved as a signal peptide. Cys17 is lipidated: N-palmitoyl cysteine. Cys17 is lipidated: S-diacylglycerol cysteine.

This sequence belongs to the BMP lipoprotein family. As to quaternary structure, monomer.

The protein localises to the cell inner membrane. Functionally, may be part of an ABC-type nucleoside uptake system involved in the purine salvage pathway. In Borreliella burgdorferi (strain ATCC 35210 / DSM 4680 / CIP 102532 / B31) (Borrelia burgdorferi), this protein is Basic membrane protein C (bmpC).